Reading from the N-terminus, the 912-residue chain is Protein transport protein SEC24-2 (912 aa).

A compositionally biased stretch (basic residues) spans 1-11; the sequence is MSNPSRPKKRV. Disordered regions lie at residues 1-83 and 102-129; these read MSNP…QQIS and PNAY…PGRP. Composition is skewed to polar residues over residues 33 to 45, 53 to 74, and 106 to 129; these read SGQT…SGSA, GQFT…MTPA, and YQPN…PGRP. Zn(2+)-binding residues include Cys226, Cys229, Cys248, and Cys251. The interval 226-251 is zinc finger-like; it reads CRRCRGYLNPFVKILQVESKWRCNFC.

This sequence belongs to the SEC23/SEC24 family. SEC24 subfamily. In terms of assembly, the COPII coat is composed of at least 5 proteins: the SEC23/24 complex, the SEC13/31 complex, and the protein SAR1. Golgi apparatus membrane; Peripheral membrane protein; Cytoplasmic side.

The protein localises to the cytoplasm. Its subcellular location is the cytoplasmic vesicle. The protein resides in the COPII-coated vesicle membrane. It localises to the endoplasmic reticulum membrane. It is found in the golgi apparatus membrane. Its function is as follows. Component of the coat protein complex II (COPII) which promotes the formation of transport vesicles from the endoplasmic reticulum (ER). The coat has two main functions, the physical deformation of the endoplasmic reticulum membrane into vesicles and the selection of cargo molecules. In Naumovozyma castellii (Yeast), this protein is Protein transport protein SEC24-2 (SEC242).